A 3003-amino-acid chain; its full sequence is MAX gene-associated protein (3003 aa).

Glycyl lysine isopeptide (Lys-Gly) (interchain with G-Cter in SUMO2) cross-links involve residues lysine 4 and lysine 178. The T-box DNA-binding region spans 84 to 260 (MWNEFHNRST…YNPFAKGFRD (177 aa)). The segment covering 259 to 277 (RDDGLSSKPQREGKQRNSS) has biased composition (basic and acidic residues). The tract at residues 259–290 (RDDGLSSKPQREGKQRNSSDQEGNSVSSSPAH) is disordered. Residues 278 to 288 (DQEGNSVSSSP) are compositionally biased toward polar residues. Glycyl lysine isopeptide (Lys-Gly) (interchain with G-Cter in SUMO2) cross-links involve residues lysine 323, lysine 329, lysine 348, lysine 431, lysine 458, lysine 463, and lysine 480. Serine 531 is modified (phosphoserine). The interval 553-647 (ILDNSSTERI…NIPVGPGSTF (95 aa)) is disordered. Residue lysine 567 forms a Glycyl lysine isopeptide (Lys-Gly) (interchain with G-Cter in SUMO2) linkage. Polar residues predominate over residues 595 to 607 (KTVTASHSASPNT). Serine 604 is modified (phosphoserine). Residues lysine 610, lysine 651, lysine 782, lysine 788, lysine 814, and lysine 823 each participate in a glycyl lysine isopeptide (Lys-Gly) (interchain with G-Cter in SUMO2) cross-link. Residues 610-621 (KRGRPRKLRLSK) are compositionally biased toward basic residues. Phosphoserine is present on serine 848. A compositionally biased stretch (polar residues) spans 871 to 913 (KQSTISPSTSHSVKPQSVTTASRKTKAQNKQTTLSGRTKSSYK). Disordered regions lie at residues 871–946 (KQST…TSDN) and 967–987 (LRQAQQQHLQQQGTRPPGLSK). The residue at position 921 (serine 921) is a Phosphoserine. A Glycyl lysine isopeptide (Lys-Gly) (interchain with G-Cter in SUMO2) cross-link involves residue lysine 925. Over residues 937–946 (KNSLSSTSDN) the composition is skewed to polar residues. A compositionally biased stretch (low complexity) spans 969–978 (QAQQQHLQQQ). Residues lysine 987 and lysine 1088 each participate in a glycyl lysine isopeptide (Lys-Gly) (interchain with G-Cter in SUMO2) cross-link. A disordered region spans residues 1111–1130 (LGEEGREGGGVREDEEQLKE). Residues 1113–1122 (EEGREGGGVR) are compositionally biased toward basic and acidic residues. Residues lysine 1136, lysine 1158, lysine 1194, and lysine 1202 each participate in a glycyl lysine isopeptide (Lys-Gly) (interchain with G-Cter in SUMO2) cross-link. Disordered stretches follow at residues 1186–1215 (QPDLSSTTKGKLTPGIKPARTYTPKPNPVI), 1246–1277 (QRQLSPPLSPSSSFQQQSSCYSSPENRVTKEL), 1297–1323 (SQEKSWKSSCNEGESSSTSYVHQRSPG), and 1376–1424 (RGEK…DISP). 2 stretches are compositionally biased toward low complexity: residues 1248–1269 (QLSPPLSPSSSFQQQSSCYSSP) and 1303–1315 (KSSCNEGESSSTS). Residues serine 1423 and serine 1450 each carry the phosphoserine modification. Glycyl lysine isopeptide (Lys-Gly) (interchain with G-Cter in SUMO2) cross-links involve residues lysine 1454 and lysine 1495. 6 disordered regions span residues 1476-1508 (AKVAASRKPRTLLPSTSNSKMASSGPATNRSGK), 1722-1746 (PPVSQRPENAPQIPVTTPQISSNNV), 1856-1885 (ISPPETQNLASKTGSESKITPSTGGQPVGT), 1920-1954 (IKKESQSTDQKDETNSIKREEETKKALPSKDKALD), 1964-1983 (SGIIASENTSNNSLDDGGDL), and 1988-2038 (TLRE…AGSK). 3 stretches are compositionally biased toward polar residues: residues 1488 to 1507 (LPSTSNSKMASSGPATNRSG), 1735 to 1746 (PVTTPQISSNNV), and 1859 to 1880 (PETQNLASKTGSESKITPSTGG). Residues lysine 1937 and lysine 1944 each participate in a glycyl lysine isopeptide (Lys-Gly) (interchain with G-Cter in SUMO2) cross-link. A compositionally biased stretch (polar residues) spans 1964-1976 (SGIIASENTSNNS). Glycyl lysine isopeptide (Lys-Gly) (interchain with G-Cter in SUMO2) cross-links involve residues lysine 2060 and lysine 2084. Residues 2087 to 2110 (LSGNQVKEQQSNSQAEAKKDCEDS) form a disordered region. Residues 2088 to 2101 (SGNQVKEQQSNSQA) show a composition bias toward polar residues. Glycyl lysine isopeptide (Lys-Gly) (interchain with G-Cter in SUMO2) cross-links involve residues lysine 2104, lysine 2152, and lysine 2179. At arginine 2206 the chain carries Omega-N-methylarginine. The interval 2207 to 2255 (GSRHFQGHLLLPREQMKPKQQTKDGRSSAADFTVLDLEDEDEEDEKTDD) is disordered. The span at 2220–2232 (EQMKPKQQTKDGR) shows a compositional bias: basic and acidic residues. Residue lysine 2225 forms a Glycyl lysine isopeptide (Lys-Gly) (interchain with G-Cter in SUMO2) linkage. The span at 2242-2255 (DLEDEDEEDEKTDD) shows a compositional bias: acidic residues. Residues lysine 2317, lysine 2352, lysine 2396, and lysine 2471 each participate in a glycyl lysine isopeptide (Lys-Gly) (interchain with G-Cter in SUMO2) cross-link. The region spanning 2362–2413 (YYRRTHTANERRRRGEMRDLFEKLKITLGLLHSSKVSKSLILNRAFSEIQGL) is the bHLH domain. Residue serine 2480 is modified to Phosphoserine. A disordered region spans residues 2515–2534 (KRDQATENASPSDTPHSSAN). The span at 2520-2534 (TENASPSDTPHSSAN) shows a compositional bias: polar residues. Glycyl lysine isopeptide (Lys-Gly) (interchain with G-Cter in SUMO2) cross-links involve residues lysine 2568 and lysine 2618. The segment covering 2629–2651 (SEASSLKDTERISSRGNHRDSRK) has biased composition (basic and acidic residues). Residues 2629–2654 (SEASSLKDTERISSRGNHRDSRKALG) form a disordered region. Lysine 2724 is covalently cross-linked (Glycyl lysine isopeptide (Lys-Gly) (interchain with G-Cter in SUMO2)). A phosphoserine mark is found at serine 2849 and serine 2860. The tract at residues 2877–2917 (LVSHRKSSDGGQSTSGLPAEPESVSSPPILHMKTGPENSNT) is disordered. Lysine 2979 participates in a covalent cross-link: Glycyl lysine isopeptide (Lys-Gly) (interchain with G-Cter in SUMO2).

In terms of assembly, component of some MLL1/MLL complex, at least composed of the core components KMT2A/MLL1, ASH2L, HCFC1/HCF1, WDR5 and RBBP5, as well as the facultative components BACC1, CHD8, E2F6, HSP70, INO80C, KANSL1, LAS1L, MAX, MCRS1, MGA, MYST1/MOF, PELP1, PHF20, PRP31, RING2, RUVB1/TIP49A, RUVB2/TIP49B, SENP3, TAF1, TAF4, TAF6, TAF7, TAF9 and TEX10. Interacts with ZMYND11. Interacts with MAX. Requires heterodimerization with MAX for E-box binding. As to expression, highly expressed in germ cells and granulosa cells.

It is found in the nucleus. In terms of biological role, functions as a dual-specificity transcription factor, regulating the expression of both MAX-network and T-box family target genes. Functions as a repressor or an activator. Binds to 5'-AATTTCACACCTAGGTGTGAAATT-3' core sequence and seems to regulate MYC-MAX target genes. Suppresses transcriptional activation by MYC and inhibits MYC-dependent cell transformation. Function activated by heterodimerization with MAX. This heterodimerization serves the dual function of both generating an E-box-binding heterodimer and simultaneously blocking interaction of a corepressor. The polypeptide is MAX gene-associated protein (Mus musculus (Mouse)).